Consider the following 306-residue polypeptide: Myb family transcription factor MOF1 (306 aa).

The HTH myb-type domain maps to 19 to 79; that stretch reads RSKVPRLRWT…HLQMYRCSRL (61 aa). The segment at residues 50-75 is a DNA-binding region (H-T-H motif); that stretch reads PKLILQLMGVKGLTISHVKSHLQMYR.

As to quaternary structure, interacts with TPR1, TPR2 and TPR3. Expressed in roots, leaves, leaf sheaths, culms, panicles, lemmas, paleas, lodicules, stamens, and pistils.

It is found in the nucleus. Its function is as follows. Transcriptional repressor that plays a role in the regulation of organ identity and spikelet meristem determinacy. Interacts with the TPR corepressors to possibly repress the expression of downstream target genes. The sequence is that of Myb family transcription factor MOF1 from Oryza sativa subsp. japonica (Rice).